Here is a 183-residue protein sequence, read N- to C-terminus: uncharacterized protein (183 aa).

In terms of domain architecture, Macro spans 1–182 (MIKVVKGDIT…KALKIVGQGG (182 aa)).

This is an uncharacterized protein from Pyrococcus furiosus (strain ATCC 43587 / DSM 3638 / JCM 8422 / Vc1).